The sequence spans 429 residues: Glutamate-1-semialdehyde 2,1-aminomutase 2 (429 aa).

Residue lysine 267 is modified to N6-(pyridoxal phosphate)lysine.

The protein belongs to the class-III pyridoxal-phosphate-dependent aminotransferase family. HemL subfamily. As to quaternary structure, homodimer. It depends on pyridoxal 5'-phosphate as a cofactor.

It is found in the cytoplasm. The enzyme catalyses (S)-4-amino-5-oxopentanoate = 5-aminolevulinate. It functions in the pathway porphyrin-containing compound metabolism; protoporphyrin-IX biosynthesis; 5-aminolevulinate from L-glutamyl-tRNA(Glu): step 2/2. This Brevibacillus brevis (strain 47 / JCM 6285 / NBRC 100599) protein is Glutamate-1-semialdehyde 2,1-aminomutase 2.